A 469-amino-acid chain; its full sequence is Neuraminidase (469 aa).

At 1–9 (MNPNQKIIT) the chain is on the intravirion side. The chain crosses the membrane as a helical span at residues 10 to 30 (IGSVSLTIATICFLMQIAILV). The interval 11–33 (GSVSLTIATICFLMQIAILVTTV) is involved in apical transport and lipid raft association. Residues 31–469 (TTVTLHFKQY…DGADINLMPI (439 aa)) are Virion surface-facing. Residues 36 to 88 (HFKQYECSSPPNNQVMPCEPIIIERNITEIVYLTNTTIEKEICPKLVEYRNWS) form a hypervariable stalk region region. Asn61, Asn70, and Asn86 each carry an N-linked (GlcNAc...) asparagine; by host glycan. A head of neuraminidase region spans residues 91-469 (QCKITGFAPF…DGADINLMPI (379 aa)). Cystine bridges form between Cys92-Cys417, Cys124-Cys129, Cys183-Cys230, Cys232-Cys237, Cys278-Cys291, Cys280-Cys289, Cys318-Cys337, and Cys421-Cys447. Substrate is bound at residue Arg118. N-linked (GlcNAc...) asparagine; by host glycosylation is present at Asn146. Asp151 functions as the Proton donor/acceptor in the catalytic mechanism. Position 152 (Arg152) interacts with substrate. 2 N-linked (GlcNAc...) asparagine; by host glycosylation sites follow: Asn200 and Asn234. A substrate-binding site is contributed by 276-277 (EE). Arg292 contacts substrate. Residues Asp293, Gly297, and Asp324 each coordinate Ca(2+). Residue Arg371 participates in substrate binding. Asn402 carries an N-linked (GlcNAc...) asparagine; by host glycan. The active-site Nucleophile is Tyr406.

It belongs to the glycosyl hydrolase 34 family. Homotetramer. The cofactor is Ca(2+). In terms of processing, N-glycosylated.

The protein resides in the virion membrane. It is found in the host apical cell membrane. The catalysed reaction is Hydrolysis of alpha-(2-&gt;3)-, alpha-(2-&gt;6)-, alpha-(2-&gt;8)- glycosidic linkages of terminal sialic acid residues in oligosaccharides, glycoproteins, glycolipids, colominic acid and synthetic substrates.. Inhibited by the neuraminidase inhibitors zanamivir (Relenza) and oseltamivir (Tamiflu). These drugs interfere with the release of progeny virus from infected cells and are effective against all influenza strains. Resistance to neuraminidase inhibitors is quite rare. Its function is as follows. Catalyzes the removal of terminal sialic acid residues from viral and cellular glycoconjugates. Cleaves off the terminal sialic acids on the glycosylated HA during virus budding to facilitate virus release. Additionally helps virus spread through the circulation by further removing sialic acids from the cell surface. These cleavages prevent self-aggregation and ensure the efficient spread of the progeny virus from cell to cell. Otherwise, infection would be limited to one round of replication. Described as a receptor-destroying enzyme because it cleaves a terminal sialic acid from the cellular receptors. May facilitate viral invasion of the upper airways by cleaving the sialic acid moieties on the mucin of the airway epithelial cells. Likely to plays a role in the budding process through its association with lipid rafts during intracellular transport. May additionally display a raft-association independent effect on budding. Plays a role in the determination of host range restriction on replication and virulence. Sialidase activity in late endosome/lysosome traffic seems to enhance virus replication. In Influenza A virus (strain A/Hong Kong/5/1983 H3N2), this protein is Neuraminidase.